We begin with the raw amino-acid sequence, 64 residues long: Alpha-like toxin BmK M2 (64 aa).

The region spanning 2–64 (RDAYIAKPHN…VPIRVPGKCH (63 aa)) is the LCN-type CS-alpha/beta domain. Disulfide bonds link C12/C63, C16/C36, C22/C46, and C26/C48.

Belongs to the long (4 C-C) scorpion toxin superfamily. Sodium channel inhibitor family. Alpha subfamily. As to expression, expressed by the venom gland.

It is found in the secreted. In terms of biological role, alpha toxins bind voltage-independently at site-3 of sodium channels (Nav) and inhibit the inactivation of the activated channels, thereby blocking neuronal transmission. This toxin is active against both mammals and insects, and is classified as an alpha-like toxin. The sequence is that of Alpha-like toxin BmK M2 from Olivierus martensii (Manchurian scorpion).